The following is a 278-amino-acid chain: Large ribosomal subunit protein uL2 (278 aa).

2 disordered regions span residues 28 to 56 (KPVK…GIAG) and 221 to 278 (RGVA…KKKR). Residues 269 to 278 (IRSRHAKKKR) show a composition bias toward basic residues.

This sequence belongs to the universal ribosomal protein uL2 family. In terms of assembly, part of the 50S ribosomal subunit. Forms a bridge to the 30S subunit in the 70S ribosome.

Functionally, one of the primary rRNA binding proteins. Required for association of the 30S and 50S subunits to form the 70S ribosome, for tRNA binding and peptide bond formation. It has been suggested to have peptidyltransferase activity; this is somewhat controversial. Makes several contacts with the 16S rRNA in the 70S ribosome. The polypeptide is Large ribosomal subunit protein uL2 (Rhizorhabdus wittichii (strain DSM 6014 / CCUG 31198 / JCM 15750 / NBRC 105917 / EY 4224 / RW1) (Sphingomonas wittichii)).